Here is a 477-residue protein sequence, read N- to C-terminus: Protoporphyrinogen oxidase (477 aa).

FAD contacts are provided by residues 9–14, 34–35, Trp42, 57–60, Val257, Ala449, and 454–456; these read GGGISG, ES, GPRG, and VAV.

It belongs to the protoporphyrinogen/coproporphyrinogen oxidase family. Protoporphyrinogen oxidase subfamily. As to quaternary structure, monomer. Homodimer. The cofactor is FAD. As to expression, expressed in heart, brain, placenta, lung, liver, skeletal muscle, kidney and pancreas.

Its subcellular location is the mitochondrion inner membrane. It carries out the reaction protoporphyrinogen IX + 3 O2 = protoporphyrin IX + 3 H2O2. It functions in the pathway porphyrin-containing compound metabolism; protoporphyrin-IX biosynthesis; protoporphyrin-IX from protoporphyrinogen-IX: step 1/1. Its function is as follows. Catalyzes the 6-electron oxidation of protoporphyrinogen-IX to form protoporphyrin-IX. In Homo sapiens (Human), this protein is Protoporphyrinogen oxidase (PPOX).